A 1142-amino-acid chain; its full sequence is Protein lin-25 (1142 aa).

Residues 600–613 (IEEEIEEEEEDIEP) are compositionally biased toward acidic residues. The segment at 600-706 (IEEEIEEEEE…EKPKEPLEPT (107 aa)) is disordered. Composition is skewed to basic and acidic residues over residues 614 to 627 (EVVK…TEKE), 652 to 662 (DEQKTEEKMDT), and 679 to 703 (DPPK…KEPL).

The protein localises to the nucleus. It is found in the cytoplasm. Participates in the inductive signaling pathway downstream of let-60 Ras and the RAF/MAP kinase cascade to regulate specification and differentiation of many cell types. Positively regulates the fate of vulval precursor cells. Required for induction of the P12 and excretory duct cell fates. In males, it is also required for proper formation of spicules. Does not function in the signaling pathway that promotes exit from pachytene. The protein is Protein lin-25 of Caenorhabditis briggsae.